A 264-amino-acid polypeptide reads, in one-letter code: Acyl-[acyl-carrier-protein]--UDP-N-acetylglucosamine O-acyltransferase (264 aa).

It belongs to the transferase hexapeptide repeat family. LpxA subfamily. Homotrimer.

Its subcellular location is the cytoplasm. It catalyses the reaction a (3R)-hydroxyacyl-[ACP] + UDP-N-acetyl-alpha-D-glucosamine = a UDP-3-O-[(3R)-3-hydroxyacyl]-N-acetyl-alpha-D-glucosamine + holo-[ACP]. It functions in the pathway glycolipid biosynthesis; lipid IV(A) biosynthesis; lipid IV(A) from (3R)-3-hydroxytetradecanoyl-[acyl-carrier-protein] and UDP-N-acetyl-alpha-D-glucosamine: step 1/6. Its function is as follows. Involved in the biosynthesis of lipid A, a phosphorylated glycolipid that anchors the lipopolysaccharide to the outer membrane of the cell. The polypeptide is Acyl-[acyl-carrier-protein]--UDP-N-acetylglucosamine O-acyltransferase (Rickettsia rickettsii).